A 444-amino-acid polypeptide reads, in one-letter code: Glutamate--tRNA ligase 2 (444 aa).

Positions 7–17 match the 'HIGH' region motif; that stretch reads PSPTGYLHVGN. The 'KMSKS' region signature appears at 240-244; it reads KLSKR. Lys243 lines the ATP pocket.

It belongs to the class-I aminoacyl-tRNA synthetase family. Glutamate--tRNA ligase type 1 subfamily. Monomer.

Its subcellular location is the cytoplasm. It carries out the reaction tRNA(Glu) + L-glutamate + ATP = L-glutamyl-tRNA(Glu) + AMP + diphosphate. Functionally, catalyzes the attachment of glutamate to tRNA(Glu) in a two-step reaction: glutamate is first activated by ATP to form Glu-AMP and then transferred to the acceptor end of tRNA(Glu). In Gluconobacter oxydans (strain 621H) (Gluconobacter suboxydans), this protein is Glutamate--tRNA ligase 2.